A 251-amino-acid chain; its full sequence is Probable aquaporin TIP4-1 (251 aa).

2 helical membrane-spanning segments follow: residues 26-46 (LVLT…AGVP) and 57-77 (ALAG…TAGF). An NPA 1 motif is present at residues 85–87 (NPA). 3 helical membrane passes run 104-124 (ALYV…LRYL), 144-164 (GLVM…ATIL), and 170-190 (VPGF…IAGG). Positions 198 to 200 (NPA) match the NPA 2 motif. Residues 219–239 (WLGPLIGGPLAGLVYESLFLV) form a helical membrane-spanning segment.

This sequence belongs to the MIP/aquaporin (TC 1.A.8) family. TIP (TC 1.A.8.10) subfamily. In terms of tissue distribution, expressed in roots, leaves and anthers.

The protein resides in the vacuole membrane. Aquaporins facilitate the transport of water and small neutral solutes across cell membranes. May be involved in transport from the vacuolar compartment to the cytoplasm. The chain is Probable aquaporin TIP4-1 (TIP4-1) from Oryza sativa subsp. japonica (Rice).